Reading from the N-terminus, the 490-residue chain is Patellin-3 (490 aa).

The segment covering 1 to 17 (MAEEPTTTTLVTPEKLP) has biased composition (low complexity). The disordered stretch occupies residues 1–121 (MAEEPTTTTL…ESSKLSDLSN (121 aa)). Residue Ala-2 is modified to N-acetylalanine. Polar residues predominate over residues 19-33 (PSLTPSEVSESTQDA). Over residues 46 to 56 (ETNPPETADTT) the composition is skewed to low complexity. Basic and acidic residues-rich tracts occupy residues 57 to 69 (TKPE…EHHP) and 79 to 100 (STEK…EKKS). Ser-108 is modified (phosphoserine). A compositionally biased stretch (basic and acidic residues) spans 109–121 (FKEESSKLSDLSN). Lys-193 participates in a covalent cross-link: Glycyl lysine isopeptide (Lys-Gly) (interchain with G-Cter in ubiquitin). One can recognise a CRAL-TRIO domain in the interval 202 to 377 (EEDLVDDLDK…QYGGLSVDPC (176 aa)). Residues 353 to 487 (AETLFKYISP…KKKLVYRFNV (135 aa)) form the GOLD domain.

This sequence belongs to the patellin family.

It localises to the membrane. The protein localises to the cytoplasm. Its function is as follows. Carrier protein that may be involved in membrane-trafficking events associated with cell plate formation during cytokinesis. Binds to some hydrophobic molecules such as phosphoinositides and promotes their transfer between the different cellular sites. In Arabidopsis thaliana (Mouse-ear cress), this protein is Patellin-3 (PATL3).